We begin with the raw amino-acid sequence, 739 residues long: Transcription regulator protein BACH1 (739 aa).

Positions 34–100 (CDVTVLVEGQ…AYTAKLILSK (67 aa)) constitute a BTB domain. Serine 196 is modified (phosphoserine). 2 disordered regions span residues 287–321 (MESEDTEGQDPSPQCPAEQPQGTPLPQDSAGPHGL) and 344–391 (KTVK…RSSV). Composition is skewed to basic and acidic residues over residues 346–364 (VKTEKPLSRPDAQDEKPSE) and 376–391 (PKEDSSSLASEDRSSV). Phosphoserine is present on serine 448. The 64-residue stretch at 560 to 623 (CIHDIRRRSK…GETKQNLTGL (64 aa)) folds into the bZIP domain. Residues 565–581 (RRRSKNRIAAQRCRKRK) are basic motif. The tract at residues 585–592 (IQNLESEI) is leucine-zipper. The interval 679 to 708 (PPTAPPPCGRGSSAASQELVQESPPTTAAA) is disordered. The span at 699-708 (QESPPTTAAA) shows a compositional bias: low complexity.

This sequence belongs to the bZIP family. CNC subfamily. In terms of assembly, heterodimer of BACH1 and MAFK. Post-translationally, ubiquitinated by the SCF(FBXL17) complex or by the by the SCF(FBXO22) complex, leading to its degradation by the proteasome. Under oxidative stress, reactive oxygen species covalently modify cysteine residues on the bZIP domain of BACH1 and release it from chromatin. If the BTB domain of BACH1 remains intact, its beta1-alpha6 degron is recognized by FBXO22, promoting its ubiquitination and degradation. If the structural integrity of the beta1-alpha6 degron is compromised, FBXL17 will transiently associate with the BACH1 BTB dimer and remodel it into stably bound monomer for ubiquitination and degradation. Ubiquitous.

The protein resides in the nucleus. Its function is as follows. Transcriptional regulator that acts as a repressor or activator, depending on the context. Binds to NF-E2 DNA binding sites. Plays important roles in coordinating transcription activation and repression by MAFK. Together with MAF, represses the transcription of genes under the control of the NFE2L2 oxidative stress pathway. This chain is Transcription regulator protein BACH1 (Bach1), found in Mus musculus (Mouse).